The following is a 341-amino-acid chain: Hygromycin-B 4-O-kinase (341 aa).

D198 acts as the Proton acceptor in catalysis.

This sequence belongs to the aminoglycoside phosphotransferase family.

The enzyme catalyses hygromycin B + ATP = 4-O-phosphohygromycin B + ADP + H(+). The aminoglycoside phosphotransferases achieve inactivation of their antibiotic substrates by phosphorylation. Only phosphorylates hygromycin and closely related compounds such as demethyl analogs and destomycin. This Escherichia coli protein is Hygromycin-B 4-O-kinase (hph).